The following is a 392-amino-acid chain: 23S rRNA (uracil(747)-C(5))-methyltransferase RlmC (392 aa).

Residues Cys-4, Cys-12, Cys-15, and Cys-93 each contribute to the [4Fe-4S] cluster site. S-adenosyl-L-methionine contacts are provided by Gln-218, Phe-247, Glu-275, and Asn-321. The active-site Nucleophile is Cys-348.

Belongs to the class I-like SAM-binding methyltransferase superfamily. RNA M5U methyltransferase family. RlmC subfamily.

It catalyses the reaction uridine(747) in 23S rRNA + S-adenosyl-L-methionine = 5-methyluridine(747) in 23S rRNA + S-adenosyl-L-homocysteine + H(+). Its function is as follows. Catalyzes the formation of 5-methyl-uridine at position 747 (m5U747) in 23S rRNA. This is 23S rRNA (uracil(747)-C(5))-methyltransferase RlmC from Haemophilus influenzae (strain 86-028NP).